A 162-amino-acid polypeptide reads, in one-letter code: SsrA-binding protein (162 aa).

Belongs to the SmpB family.

It is found in the cytoplasm. Its function is as follows. Required for rescue of stalled ribosomes mediated by trans-translation. Binds to transfer-messenger RNA (tmRNA), required for stable association of tmRNA with ribosomes. tmRNA and SmpB together mimic tRNA shape, replacing the anticodon stem-loop with SmpB. tmRNA is encoded by the ssrA gene; the 2 termini fold to resemble tRNA(Ala) and it encodes a 'tag peptide', a short internal open reading frame. During trans-translation Ala-aminoacylated tmRNA acts like a tRNA, entering the A-site of stalled ribosomes, displacing the stalled mRNA. The ribosome then switches to translate the ORF on the tmRNA; the nascent peptide is terminated with the 'tag peptide' encoded by the tmRNA and targeted for degradation. The ribosome is freed to recommence translation, which seems to be the essential function of trans-translation. The polypeptide is SsrA-binding protein (Buchnera aphidicola subsp. Acyrthosiphon pisum (strain 5A)).